We begin with the raw amino-acid sequence, 154 residues long: D-aminoacyl-tRNA deacylase (154 aa).

The Gly-cisPro motif, important for rejection of L-amino acids signature appears at 138–139 (GP).

It belongs to the DTD family. In terms of assembly, homodimer.

The protein resides in the cytoplasm. It carries out the reaction glycyl-tRNA(Ala) + H2O = tRNA(Ala) + glycine + H(+). It catalyses the reaction a D-aminoacyl-tRNA + H2O = a tRNA + a D-alpha-amino acid + H(+). In terms of biological role, an aminoacyl-tRNA editing enzyme that deacylates mischarged D-aminoacyl-tRNAs. Also deacylates mischarged glycyl-tRNA(Ala), protecting cells against glycine mischarging by AlaRS. Acts via tRNA-based rather than protein-based catalysis; rejects L-amino acids rather than detecting D-amino acids in the active site. By recycling D-aminoacyl-tRNA to D-amino acids and free tRNA molecules, this enzyme counteracts the toxicity associated with the formation of D-aminoacyl-tRNA entities in vivo and helps enforce protein L-homochirality. This chain is D-aminoacyl-tRNA deacylase, found in Halorhodospira halophila (strain DSM 244 / SL1) (Ectothiorhodospira halophila (strain DSM 244 / SL1)).